An 889-amino-acid polypeptide reads, in one-letter code: F-BAR domain only protein 1 (889 aa).

An F-BAR domain is found at 1–248 (MSYFGEHFWG…NIENVSVEML (248 aa)). The mediates membrane-binding stretch occupies residues 1-275 (MSYFGEHFWG…LDFEAYSAAA (275 aa)). A coiled-coil region spans residues 156–195 (TSQKEMDKAETKTKKAAESLRRSVEKYNSARADFEQKMLD). The interval 267-442 (DFEAYSAAAL…KNLFGPPLES (176 aa)) is mediates interaction with the adaptor protein complex AP-2. Residues 294-352 (LSRREREPEPPAAVDFLEPDSGTCPEVDEEGFTVRPDVTQNSTAEPSRFSSSDSDFDDE) are disordered. Residues S295, S347, and S372 each carry the phosphoserine modification. A disordered region spans residues 382–596 (ATAGSLILPP…SPLGSSAAST (215 aa)). A compositionally biased stretch (low complexity) spans 450–469 (TGSSSLGFTSSPSPFSSSSP). Over residues 496–511 (PGTPQSPPSCRAPPPE) the composition is skewed to pro residues. The residue at position 530 (S530) is a Phosphoserine. Over residues 580–596 (LSRSLSPSPLGSSAAST) the composition is skewed to low complexity. The mediates interaction with AGFG1, CALM, DAB2, EPS15, EPS15R, ITSN1 and clathrin stretch occupies residues 609–889 (HGVSRGPSPV…FATGMYLVSC (281 aa)). S616 carries the phosphoserine modification. The MHD domain maps to 625-888 (ALPIATAFTE…RFATGMYLVS (264 aa)). The interval 826 to 849 (AGGSGRLSASWEPLSGPSTPSPVA) is disordered.

It belongs to the FCHO family. May oligomerize and form homotetramer. Interacts with AP2A2 and AP2B1; 2 subunits of the adaptor protein complex AP-2. Interacts with DAB2. Interacts with clathrin (CLTC or CLTCL1). Interacts with EPS15, EPS15R and ITSN1. Interacts with AGFG1 and CALM. May interact with ACVR1; linking this receptor to clathrin-mediated endocytosis. As to expression, predominantly expressed in lymphoid cells.

It localises to the membrane. Its subcellular location is the clathrin-coated pit. Its function is as follows. Functions in an early step of clathrin-mediated endocytosis. Has both a membrane binding/bending activity and the ability to recruit proteins essential to the formation of functional clathrin-coated pits. May regulate Bmp signaling by regulating clathrin-mediated endocytosis of Bmp receptors. Involved in the regulation of T-cell poliferation and activation. Affects TCR clustering upon receptor triggering and modulates its internalisation, playing a role in TCR-dependent T-cell activation. In Homo sapiens (Human), this protein is F-BAR domain only protein 1.